Here is a 253-residue protein sequence, read N- to C-terminus: Proteasome subunit alpha type-7 (253 aa).

Belongs to the peptidase T1A family. In terms of assembly, the 26S proteasome consists of a 20S proteasome core and two 19S regulatory subunits. The 20S proteasome core is composed of 28 subunits that are arranged in four stacked rings, resulting in a barrel-shaped structure. The two end rings are each formed by seven alpha subunits, and the two central rings are each formed by seven beta subunits. The catalytic chamber with the active sites is on the inside of the barrel.

The protein localises to the cytoplasm. It localises to the nucleus. The proteasome is a multicatalytic proteinase complex which is characterized by its ability to cleave peptides with Arg, Phe, Tyr, Leu, and Glu adjacent to the leaving group at neutral or slightly basic pH. The proteasome has an ATP-dependent proteolytic activity. In Caenorhabditis elegans, this protein is Proteasome subunit alpha type-7 (pas-4).